We begin with the raw amino-acid sequence, 318 residues long: MPNIKIFSGSSHQDLSQKIADRLGLELGKVVTKKFSNQETCVEIGESVRGEDVYIVQSGCGEINDNLMELLIMINACKIASASRVTAVIPCFPYARQDKKDKSRAPISAKLVANMLSVAGADHIITMDLHASQIQGFFDIPVDNLYAEPAVLKWIRENISEWRNCTIVSPDAGGAKRVTSIADRLNVDFALIHKERKKANEVDRMVLVGDVKDRVAILVDDMADTCGTICHAADKLLSAGATRVYAILTHGIFSGPVISRINNACFEAVVVTNTIPQEDKMKHCSKIQVIDISMILAEAIRRTHNGESVSYLFSHVPL.

96 to 101 (RQDKKD) serves as a coordination point for ATP. Mg(2+)-binding residues include D128, H130, D139, and D143. Position 130 (H130) interacts with ATP. The segment at 212-227 (KDRVAILVDDMADTCG) is binding of phosphoribosylpyrophosphate.

This sequence belongs to the ribose-phosphate pyrophosphokinase family. Homodimer. The active form is probably a hexamer composed of 3 homodimers. The cofactor is Mg(2+).

It catalyses the reaction D-ribose 5-phosphate + ATP = 5-phospho-alpha-D-ribose 1-diphosphate + AMP + H(+). Its pathway is metabolic intermediate biosynthesis; 5-phospho-alpha-D-ribose 1-diphosphate biosynthesis; 5-phospho-alpha-D-ribose 1-diphosphate from D-ribose 5-phosphate (route I): step 1/1. Its activity is regulated as follows. Activated by magnesium and inorganic phosphate. Its function is as follows. Catalyzes the synthesis of phosphoribosylpyrophosphate (PRPP) that is essential for nucleotide synthesis. In Macaca fascicularis (Crab-eating macaque), this protein is Ribose-phosphate pyrophosphokinase 1 (PRPS1).